The following is a 429-amino-acid chain: Adenylosuccinate synthetase (429 aa).

GTP is bound by residues 12-18 (GDEGKGK) and 40-42 (GHT). The active-site Proton acceptor is the Asp-13. Residues Asp-13 and Gly-40 each coordinate Mg(2+). Residues 13 to 16 (DEGK), 38 to 41 (NAGH), Thr-128, Arg-142, Gln-223, and Arg-302 each bind IMP. The active-site Proton donor is the His-41. Position 298–304 (298–304 (TVTGRPR)) interacts with substrate. Residues Arg-304, 330 to 332 (LLD), and 412 to 414 (SVG) contribute to the GTP site.

It belongs to the adenylosuccinate synthetase family. In terms of assembly, homodimer. Requires Mg(2+) as cofactor.

It localises to the cytoplasm. The catalysed reaction is IMP + L-aspartate + GTP = N(6)-(1,2-dicarboxyethyl)-AMP + GDP + phosphate + 2 H(+). Its pathway is purine metabolism; AMP biosynthesis via de novo pathway; AMP from IMP: step 1/2. Functionally, plays an important role in the de novo pathway of purine nucleotide biosynthesis. Catalyzes the first committed step in the biosynthesis of AMP from IMP. This is Adenylosuccinate synthetase from Lactobacillus delbrueckii subsp. bulgaricus (strain ATCC 11842 / DSM 20081 / BCRC 10696 / JCM 1002 / NBRC 13953 / NCIMB 11778 / NCTC 12712 / WDCM 00102 / Lb 14).